A 237-amino-acid polypeptide reads, in one-letter code: Sugar fermentation stimulation protein homolog (237 aa).

It belongs to the SfsA family.

This Pseudomonas syringae pv. syringae (strain B728a) protein is Sugar fermentation stimulation protein homolog.